A 60-amino-acid polypeptide reads, in one-letter code: Large ribosomal subunit protein uL30 (60 aa).

Belongs to the universal ribosomal protein uL30 family. Part of the 50S ribosomal subunit.

This chain is Large ribosomal subunit protein uL30, found in Burkholderia ambifaria (strain MC40-6).